The sequence spans 485 residues: Glutamate--tRNA ligase (485 aa).

A 'HIGH' region motif is present at residues 12-22 (PSPTGYMHVGN). Zn(2+)-binding residues include Cys-109, Cys-111, Cys-136, and His-138. The 'KMSKS' region signature appears at 253 to 257 (KLSKR). Position 256 (Lys-256) interacts with ATP.

Belongs to the class-I aminoacyl-tRNA synthetase family. Glutamate--tRNA ligase type 1 subfamily. As to quaternary structure, monomer. Zn(2+) is required as a cofactor.

It is found in the cytoplasm. The enzyme catalyses tRNA(Glu) + L-glutamate + ATP = L-glutamyl-tRNA(Glu) + AMP + diphosphate. Its function is as follows. Catalyzes the attachment of glutamate to tRNA(Glu) in a two-step reaction: glutamate is first activated by ATP to form Glu-AMP and then transferred to the acceptor end of tRNA(Glu). The protein is Glutamate--tRNA ligase of Clostridium botulinum (strain Eklund 17B / Type B).